A 380-amino-acid polypeptide reads, in one-letter code: Cytochrome b (380 aa).

The next 4 membrane-spanning stretches (helical) occupy residues 33–53 (FGSLLGLCLATQILTGLFLAM), 77–98 (WLIRNIHANGASFFFICIYMHI), 113–133 (WNIGVVLLLLTMMTAFVGYVL), and 178–198 (FFAFHFLFPFVIAAATVLHLL). Residues histidine 83 and histidine 97 each coordinate heme b. The heme b site is built by histidine 182 and histidine 196. Residue histidine 201 participates in a ubiquinone binding. 4 helical membrane-spanning segments follow: residues 226–246 (YKDLLGFVAMLLGLTSLALFA), 288–308 (LGGVLALLFSILVLMVVPILH), 320–340 (LTQFLFWALVADMLILTWIGG), and 347–367 (FIIIGQVASVIYFTIFLVLSP).

The protein belongs to the cytochrome b family. In terms of assembly, the cytochrome bc1 complex contains 3 respiratory subunits (MT-CYB, CYC1 and UQCRFS1), 2 core proteins (UQCRC1 and UQCRC2) and probably 6 low-molecular weight proteins. Heme b is required as a cofactor.

It is found in the mitochondrion inner membrane. In terms of biological role, component of the ubiquinol-cytochrome c reductase complex (complex III or cytochrome b-c1 complex) that is part of the mitochondrial respiratory chain. The b-c1 complex mediates electron transfer from ubiquinol to cytochrome c. Contributes to the generation of a proton gradient across the mitochondrial membrane that is then used for ATP synthesis. This Oncorhynchus mykiss (Rainbow trout) protein is Cytochrome b (mt-cyb).